We begin with the raw amino-acid sequence, 279 residues long: Putative colanic acid biosynthesis glycosyl transferase WcaA (279 aa).

This sequence to R.meliloti ExoO.

The protein operates within slime biogenesis; slime polysaccharide biosynthesis. The chain is Putative colanic acid biosynthesis glycosyl transferase WcaA (wcaA) from Escherichia coli (strain K12).